A 141-amino-acid chain; its full sequence is MYFAIRLSFVLAVLFCLTGNGNARMLGADFNRLQQLQRRSHQSNDANTQLKIAYEVIGIYDKYKGQKGSDLLREAQLNSEVNDFKRKNVVVDGVPAQGGGIKDAVKKIADEVPDDVKKNAKDIAVKIAKSVTKSIFKYFLN.

Residues Met1–Ala23 form the signal peptide.

This sequence belongs to the Turandot family.

It is found in the secreted. Its function is as follows. A humoral factor that may play a role in stress tolerance. The chain is Protein Turandot Z from Drosophila yakuba (Fruit fly).